A 271-amino-acid polypeptide reads, in one-letter code: ATP synthase subunit a (271 aa).

5 helical membrane-spanning segments follow: residues 38–58 (FWTL…LFLV), 100–120 (LIAP…LMDL), 146–166 (DVNI…FYSI), 220–240 (LIFI…LNVP), and 242–262 (AIFH…LTIV).

Belongs to the ATPase A chain family. In terms of assembly, F-type ATPases have 2 components, CF(1) - the catalytic core - and CF(0) - the membrane proton channel. CF(1) has five subunits: alpha(3), beta(3), gamma(1), delta(1), epsilon(1). CF(0) has three main subunits: a(1), b(2) and c(9-12). The alpha and beta chains form an alternating ring which encloses part of the gamma chain. CF(1) is attached to CF(0) by a central stalk formed by the gamma and epsilon chains, while a peripheral stalk is formed by the delta and b chains.

The protein localises to the cell inner membrane. Its function is as follows. Key component of the proton channel; it plays a direct role in the translocation of protons across the membrane. This is ATP synthase subunit a from Salmonella choleraesuis (strain SC-B67).